The following is an 878-amino-acid chain: F-box DNA helicase protein 1 (878 aa).

The region spanning 8 to 56 (SCKFYRLPLEIIPLICRFLSVQDIQSFIRVFPSFQTILDSSNDLFWKKK) is the F-box domain.

The protein belongs to the helicase family. UvrD subfamily. In terms of assembly, part of the E3 ubiquitin ligase Skp1-Cullin-1-F-box (SCF) complex. Interacts with skp1 and ssb1. Mg(2+) is required as a cofactor. Requires Mn(2+) as cofactor.

It is found in the cytoplasm. The protein localises to the nucleus. The catalysed reaction is Couples ATP hydrolysis with the unwinding of duplex DNA by translocating in the 3'-5' direction.. The enzyme catalyses ATP + H2O = ADP + phosphate + H(+). The protein operates within protein modification; protein ubiquitination. In terms of biological role, involved in ATP-dependent DNA-unwinding in a 3' to 5' direction, and ATP-ase activities stimulated by the single-stranded DNA-binding protein ssb1. Essential for viability and normal growth of stationary phase cells and in the absence of either srs2 or rqh1 DNA helicase. Involved in DNA recombination repair of strand breaks and stalled or collapsed replication forks, on the rhp51-dependent pathway: promotes rhp51 filament dissolution from stalled forks, thereby inhibiting homologous recombination and preventing excessive recombination. Ubiquitination and DNA helicase activities are essential for controlling rhp51-dependent recombination in the absence of rad22. Plays a role in the processing of toxic recombination intermediates. Promotes proper chromosome segregation. The polypeptide is F-box DNA helicase protein 1 (fbh1) (Schizosaccharomyces pombe (strain 972 / ATCC 24843) (Fission yeast)).